We begin with the raw amino-acid sequence, 331 residues long: D-alanine--D-alanine ligase (331 aa).

The region spanning Lys-112–Ala-314 is the ATP-grasp domain. Leu-138–Thr-193 is a binding site for ATP. Mg(2+) is bound by residues Asp-267, Glu-281, and Asn-283.

The protein belongs to the D-alanine--D-alanine ligase family. Requires Mg(2+) as cofactor. It depends on Mn(2+) as a cofactor.

The protein localises to the cytoplasm. The enzyme catalyses 2 D-alanine + ATP = D-alanyl-D-alanine + ADP + phosphate + H(+). It participates in cell wall biogenesis; peptidoglycan biosynthesis. Functionally, cell wall formation. The polypeptide is D-alanine--D-alanine ligase (Verminephrobacter eiseniae (strain EF01-2)).